The sequence spans 293 residues: Carbapenem-hydrolyzing beta-lactamase KPC (293 aa).

A signal peptide spans 1–24 (MSLYRRLVLLSCLSWPLAGFSATA). Serine 69 acts as the Acyl-ester intermediate in catalysis. Residue glutamate 167 is the Proton acceptor of the active site. 233–235 (KTG) provides a ligand contact to substrate.

This sequence belongs to the class-A beta-lactamase family.

The enzyme catalyses a beta-lactam + H2O = a substituted beta-amino acid. With respect to regulation, not inhibited by EDTA, inhibited by clavulanic acid and tazobactam. Hydrolyzes carbapenems, penicillins, cephalosporins and aztreonam with varying efficiency. In Klebsiella oxytoca, this protein is Carbapenem-hydrolyzing beta-lactamase KPC (bla).